The sequence spans 81 residues: Photosystem I iron-sulfur center (81 aa).

2 consecutive 4Fe-4S ferredoxin-type domains span residues 2-31 (SHAVKIYDTCIGCTQCVRACPLDVLEMVPW) and 39-68 (IASSPRTEDCVGCKRCETACPTDFLSIRVY). The [4Fe-4S] cluster site is built by Cys11, Cys14, Cys17, Cys21, Cys48, Cys51, Cys54, and Cys58.

As to quaternary structure, the cyanobacterial PSI reaction center is composed of one copy each of PsaA,B,C,D,E,F,I,J,K,L,M and X, and forms trimeric complexes. It depends on [4Fe-4S] cluster as a cofactor.

The protein resides in the cellular thylakoid membrane. The enzyme catalyses reduced [plastocyanin] + hnu + oxidized [2Fe-2S]-[ferredoxin] = oxidized [plastocyanin] + reduced [2Fe-2S]-[ferredoxin]. Functionally, apoprotein for the two 4Fe-4S centers FA and FB of photosystem I (PSI); essential for photochemical activity. FB is the terminal electron acceptor of PSI, donating electrons to ferredoxin. The C-terminus interacts with PsaA/B/D and helps assemble the protein into the PSI complex. Required for binding of PsaD and PsaE to PSI. PSI is a plastocyanin/cytochrome c6-ferredoxin oxidoreductase, converting photonic excitation into a charge separation, which transfers an electron from the donor P700 chlorophyll pair to the spectroscopically characterized acceptors A0, A1, FX, FA and FB in turn. The chain is Photosystem I iron-sulfur center from Prochlorococcus marinus (strain MIT 9211).